We begin with the raw amino-acid sequence, 193 residues long: uncharacterized protein (193 aa).

Positions 158–193 (YNPIYDDHNPLPPEKKKSILSRTRSTKLSSGEITPV) are disordered. Residues 162–174 (YDDHNPLPPEKKK) show a composition bias toward basic and acidic residues. The span at 177-193 (LSRTRSTKLSSGEITPV) shows a compositional bias: polar residues.

This is an uncharacterized protein from Micromonas pusilla (Picoplanktonic green alga).